We begin with the raw amino-acid sequence, 106 residues long: Iron-sulfur cluster assembly protein CyaY (106 aa).

Belongs to the frataxin family.

Its function is as follows. Involved in iron-sulfur (Fe-S) cluster assembly. May act as a regulator of Fe-S biogenesis. The polypeptide is Iron-sulfur cluster assembly protein CyaY (Escherichia coli O9:H4 (strain HS)).